We begin with the raw amino-acid sequence, 296 residues long: Nucleotide-binding protein SEQ_0857 (296 aa).

13-20 (GMSGAGKT) is a binding site for ATP. A GTP-binding site is contributed by 63–66 (DMRS).

The protein belongs to the RapZ-like family.

In terms of biological role, displays ATPase and GTPase activities. This chain is Nucleotide-binding protein SEQ_0857, found in Streptococcus equi subsp. equi (strain 4047).